The sequence spans 1915 residues: Protein NLRC5 (1915 aa).

The segment at 103 to 137 (LGAGEESCPGPQLYHGAKRPFQSYGSSPRRKNSKK) is disordered. The region spanning 223-542 (RVTVLLGKAG…HTVDKDTLVE (320 aa)) is the NACHT domain. 229–236 (GKAGMGKT) serves as a coordination point for ATP. LRR repeat units lie at residues 622-646 (VAET…SFHN), 716-740 (MGSL…LIQT), 744-771 (CSQL…LLPS), 772-796 (LPKL…LVKV), 871-898 (SPQL…AASQ), 900-923 (HIAQ…VLKA), 930-953 (LEDL…PREQ), 1006-1033 (THNL…LLPG), 1034-1055 (LGPL…VFSL), 1138-1161 (EVQL…LPQL), 1162-1184 (PQLS…LLAD), 1240-1263 (CNAL…CLLE), 1265-1292 (LPQL…LLET), 1348-1371 (AQQL…MLLN), 1481-1504 (SKLL…FSQV), 1519-1542 (CHHL…LLMG), 1552-1575 (KLHL…LSRM), 1576-1598 (TLLQ…CLAA), 1603-1626 (LPEL…CLAA), 1631-1654 (LPEL…CLAA), 1659-1682 (LPEL…CLAA), 1687-1711 (LPEL…LVKS), 1715-1738 (FEHL…ELAQ), 1741-1768 (PPQL…ALEQ), 1769-1795 (CPHI…RLPL), 1821-1845 (FPAL…LAQV), and 1849-1872 (MGQL…LLAQ).

This sequence belongs to the NLRP family. Interacts with CHUK and IKBKB; prevents CHUK and IKBKB phosphorylation and inhibits their kinase activity. Interacts with RIGI and IFIH1; blocks the interaction of MAVS to RIGI. In terms of tissue distribution, expressed in spleen, thymus and lung.

The protein localises to the cytoplasm. Probable regulator of the NF-kappa-B and type I interferon signaling pathways. May also regulate the type II interferon signaling pathway. Plays a role in homeostatic control of innate immunity and in antiviral defense mechanisms. The protein is Protein NLRC5 (Nlrc5) of Mus musculus (Mouse).